A 153-amino-acid polypeptide reads, in one-letter code: 1,4-dihydroxy-2-naphthoyl-CoA hydrolase (153 aa).

Asp-21 is an active-site residue.

Belongs to the 4-hydroxybenzoyl-CoA thioesterase family. DHNA-CoA hydrolase subfamily.

The enzyme catalyses 1,4-dihydroxy-2-naphthoyl-CoA + H2O = 1,4-dihydroxy-2-naphthoate + CoA + H(+). It participates in cofactor biosynthesis; phylloquinone biosynthesis. The protein operates within quinol/quinone metabolism; 1,4-dihydroxy-2-naphthoate biosynthesis; 1,4-dihydroxy-2-naphthoate from chorismate: step 7/7. Its function is as follows. Catalyzes the hydrolysis of 1,4-dihydroxy-2-naphthoyl-CoA (DHNA-CoA) to 1,4-dihydroxy-2-naphthoate (DHNA), a reaction involved in phylloquinone (vitamin K1) biosynthesis. This chain is 1,4-dihydroxy-2-naphthoyl-CoA hydrolase, found in Synechococcus sp. (strain WH7803).